Reading from the N-terminus, the 358-residue chain is UDP-N-acetylglucosamine--N-acetylmuramyl-(pentapeptide) pyrophosphoryl-undecaprenol N-acetylglucosamine transferase (358 aa).

UDP-N-acetyl-alpha-D-glucosamine-binding residues include arginine 166, serine 196, and glutamine 291.

It belongs to the glycosyltransferase 28 family. MurG subfamily.

It is found in the cell membrane. The enzyme catalyses Mur2Ac(oyl-L-Ala-gamma-D-Glu-L-Lys-D-Ala-D-Ala)-di-trans,octa-cis-undecaprenyl diphosphate + UDP-N-acetyl-alpha-D-glucosamine = beta-D-GlcNAc-(1-&gt;4)-Mur2Ac(oyl-L-Ala-gamma-D-Glu-L-Lys-D-Ala-D-Ala)-di-trans,octa-cis-undecaprenyl diphosphate + UDP + H(+). Its pathway is cell wall biogenesis; peptidoglycan biosynthesis. Its function is as follows. Cell wall formation. Catalyzes the transfer of a GlcNAc subunit on undecaprenyl-pyrophosphoryl-MurNAc-pentapeptide (lipid intermediate I) to form undecaprenyl-pyrophosphoryl-MurNAc-(pentapeptide)GlcNAc (lipid intermediate II). This Staphylococcus saprophyticus subsp. saprophyticus (strain ATCC 15305 / DSM 20229 / NCIMB 8711 / NCTC 7292 / S-41) protein is UDP-N-acetylglucosamine--N-acetylmuramyl-(pentapeptide) pyrophosphoryl-undecaprenol N-acetylglucosamine transferase.